The primary structure comprises 249 residues: Serine 3-dehydrogenase (249 aa).

Position 6–30 (6–30 (LITGATSGFGQATARRFVKEGWKVI)) interacts with NADP(+). Ser135 is a binding site for substrate. Tyr148 acts as the Proton acceptor in catalysis.

This sequence belongs to the short-chain dehydrogenases/reductases (SDR) family. In terms of assembly, homotetramer.

It catalyses the reaction L-serine + NADP(+) = aminoacetaldehyde + CO2 + NADPH. Catalyzes the oxidation of the hydroxyl group of serine to form 2-aminomalonate semialdehyde which is spontaneously converted into 2-aminoacetaldehyde and CO(2). Also acts on D-serine, L-glycerate, D-glycerate and 2-methyl-DL-serine. Does not act on O-methyl-DL-serine and L-threonine. The protein is Serine 3-dehydrogenase (sdh) of Agrobacterium fabrum (strain C58 / ATCC 33970) (Agrobacterium tumefaciens (strain C58)).